The following is a 119-amino-acid chain: Holo-[acyl-carrier-protein] synthase (119 aa).

Mg(2+) contacts are provided by D7 and E56.

It belongs to the P-Pant transferase superfamily. AcpS family. It depends on Mg(2+) as a cofactor.

It localises to the cytoplasm. It carries out the reaction apo-[ACP] + CoA = holo-[ACP] + adenosine 3',5'-bisphosphate + H(+). Functionally, transfers the 4'-phosphopantetheine moiety from coenzyme A to a Ser of acyl-carrier-protein. The chain is Holo-[acyl-carrier-protein] synthase from Chlamydia trachomatis serovar L2 (strain ATCC VR-902B / DSM 19102 / 434/Bu).